Reading from the N-terminus, the 247-residue chain is Cationic trypsin-3 (247 aa).

An N-terminal signal peptide occupies residues 1–15 (MKALIFLAFLGAAVA). The propeptide at 16–24 (LPLDDDDDK) is activation peptide. The Peptidase S1 domain maps to 25–245 (IVGGYTCQKN…YVNWIQQTVA (221 aa)). 6 disulfides stabilise this stretch: cysteine 31/cysteine 161, cysteine 49/cysteine 65, cysteine 133/cysteine 234, cysteine 140/cysteine 207, cysteine 172/cysteine 186, and cysteine 197/cysteine 221. Histidine 64 (charge relay system) is an active-site residue. 4 residues coordinate Ca(2+): glutamate 76, asparagine 78, valine 81, and glutamate 86. Aspartate 108 acts as the Charge relay system in catalysis. Catalysis depends on serine 201, which acts as the Charge relay system.

Belongs to the peptidase S1 family. The cofactor is Ca(2+).

The protein localises to the secreted. Its subcellular location is the extracellular space. It catalyses the reaction Preferential cleavage: Arg-|-Xaa, Lys-|-Xaa.. The chain is Cationic trypsin-3 (Try3) from Rattus norvegicus (Rat).